Here is an 85-residue protein sequence, read N- to C-terminus: Small ribosomal subunit protein uS17 (85 aa).

The protein belongs to the universal ribosomal protein uS17 family. In terms of assembly, part of the 30S ribosomal subunit.

In terms of biological role, one of the primary rRNA binding proteins, it binds specifically to the 5'-end of 16S ribosomal RNA. In Mycoplasmoides gallisepticum (strain R(low / passage 15 / clone 2)) (Mycoplasma gallisepticum), this protein is Small ribosomal subunit protein uS17.